A 450-amino-acid chain; its full sequence is Phosphoglucosamine mutase (450 aa).

The active-site Phosphoserine intermediate is serine 101. The Mg(2+) site is built by serine 101, aspartate 240, aspartate 242, and aspartate 244. Residue serine 101 is modified to Phosphoserine.

The protein belongs to the phosphohexose mutase family. Mg(2+) serves as cofactor. Post-translationally, activated by phosphorylation.

The enzyme catalyses alpha-D-glucosamine 1-phosphate = D-glucosamine 6-phosphate. Catalyzes the conversion of glucosamine-6-phosphate to glucosamine-1-phosphate. The protein is Phosphoglucosamine mutase of Streptococcus pneumoniae (strain JJA).